The chain runs to 504 residues: Outer capsid protein VP5 (504 aa).

Residues 1–42 (MGKFTSFLKRAGSATKNALTSDAAKRMYKMAGKTLQKVVESE) are involved in membrane permeabilization.

This sequence belongs to the orbivirus VP5 family.

Its subcellular location is the virion. VP5 protein is one of the two proteins (with VP2) which constitute the virus particle outer capsid. Acts as a membrane permeabilization protein that mediates release of viral particles from endosomal compartments into the cytoplasm. Permeabilization activity is probably negatively regulated by VP2 and is triggered by endosomal degradation of VP2 and exposure to low pH. This is Outer capsid protein VP5 (Segment-6) from African horse sickness virus 6 (AHSV-6).